A 151-amino-acid chain; its full sequence is Large-conductance mechanosensitive channel (151 aa).

The next 2 membrane-spanning stretches (helical) occupy residues 12 to 32 (GNIV…ALVT) and 71 to 91 (VLLS…FLVV). A disordered region spans residues 125–151 (NSNSSGRHEAPGTAGTPPPNYGPRADT).

This sequence belongs to the MscL family. In terms of assembly, homopentamer.

It localises to the cell membrane. Functionally, channel that opens in response to stretch forces in the membrane lipid bilayer. May participate in the regulation of osmotic pressure changes within the cell. This is Large-conductance mechanosensitive channel from Mycobacterium ulcerans (strain Agy99).